The primary structure comprises 165 residues: RNA pyrophosphohydrolase (165 aa).

Residues P13–A154 form the Nudix hydrolase domain. A Nudix box motif is present at residues G46–G67.

This sequence belongs to the Nudix hydrolase family. RppH subfamily. A divalent metal cation serves as cofactor.

Functionally, accelerates the degradation of transcripts by removing pyrophosphate from the 5'-end of triphosphorylated RNA, leading to a more labile monophosphorylated state that can stimulate subsequent ribonuclease cleavage. The sequence is that of RNA pyrophosphohydrolase from Rhodospirillum rubrum (strain ATCC 11170 / ATH 1.1.1 / DSM 467 / LMG 4362 / NCIMB 8255 / S1).